A 109-amino-acid chain; its full sequence is Putative antitoxin HigA3 (109 aa).

Residues 41–97 (LAEIRKALGHARQADVAALMGVSQARVSKLESGDLSHTELGTLQAYVAALGGHLRIV) enclose the HTH cro/C1-type domain. The segment at residues 53-72 (QADVAALMGVSQARVSKLES) is a DNA-binding region (H-T-H motif).

Functionally, putative antitoxin component of a type II toxin-antitoxin (TA) system. Its cognate toxin would be HigB3. The protein is Putative antitoxin HigA3 of Mycobacterium tuberculosis (strain ATCC 25618 / H37Rv).